The following is a 302-amino-acid chain: Pantothenate synthetase (302 aa).

30 to 37 serves as a coordination point for ATP; that stretch reads MGALHGGH. The active-site Proton donor is His37. Residue Gln61 coordinates (R)-pantoate. Beta-alanine is bound at residue Gln61. 147 to 150 lines the ATP pocket; it reads GEKD. Gln153 is a binding site for (R)-pantoate. ATP-binding positions include Val176 and 184-187; that span reads KSSR.

It belongs to the pantothenate synthetase family. In terms of assembly, homodimer.

The protein resides in the cytoplasm. It carries out the reaction (R)-pantoate + beta-alanine + ATP = (R)-pantothenate + AMP + diphosphate + H(+). The protein operates within cofactor biosynthesis; (R)-pantothenate biosynthesis; (R)-pantothenate from (R)-pantoate and beta-alanine: step 1/1. Its function is as follows. Catalyzes the condensation of pantoate with beta-alanine in an ATP-dependent reaction via a pantoyl-adenylate intermediate. This Shouchella clausii (strain KSM-K16) (Alkalihalobacillus clausii) protein is Pantothenate synthetase.